A 75-amino-acid chain; its full sequence is MFTLKKSLLLLFFLGTISLSLCEEERDADEDEGEMTEEEVKRSVLGTVKDLLIGAGKSAAQSVLTTLSCKLSNSC.

The N-terminal stretch at 1 to 22 (MFTLKKSLLLLFFLGTISLSLC) is a signal peptide. The propeptide at 23–40 (EEERDADEDEGEMTEEEV) is removed in mature form. C69 and C75 are oxidised to a cystine.

Expressed by the skin glands.

The protein resides in the secreted. Functionally, has antimicrobial activity against Gram-negative bacterium E.coli ATCC 8739 (MIC=50 ug) and against Gram positive bacteria S.aureus ATCC 6538 (MIC=25 ug). Has no activity against methicillin-resistant S.aureus ATCC 43300, B.subtilis ATCC 6633 and against fungus C.albicans ATCC 90028. This is Brevinin-2ISc from Odorrana ishikawae (Ishikawa's frog).